Here is a 258-residue protein sequence, read N- to C-terminus: Imidazole glycerol phosphate synthase subunit HisF (258 aa).

Catalysis depends on residues Asp11 and Asp130.

It belongs to the HisA/HisF family. As to quaternary structure, heterodimer of HisH and HisF.

Its subcellular location is the cytoplasm. It carries out the reaction 5-[(5-phospho-1-deoxy-D-ribulos-1-ylimino)methylamino]-1-(5-phospho-beta-D-ribosyl)imidazole-4-carboxamide + L-glutamine = D-erythro-1-(imidazol-4-yl)glycerol 3-phosphate + 5-amino-1-(5-phospho-beta-D-ribosyl)imidazole-4-carboxamide + L-glutamate + H(+). It participates in amino-acid biosynthesis; L-histidine biosynthesis; L-histidine from 5-phospho-alpha-D-ribose 1-diphosphate: step 5/9. Its function is as follows. IGPS catalyzes the conversion of PRFAR and glutamine to IGP, AICAR and glutamate. The HisF subunit catalyzes the cyclization activity that produces IGP and AICAR from PRFAR using the ammonia provided by the HisH subunit. The polypeptide is Imidazole glycerol phosphate synthase subunit HisF (Bradyrhizobium sp. (strain BTAi1 / ATCC BAA-1182)).